The primary structure comprises 217 residues: Somatotropin (217 aa).

The first 26 residues, 1–26 (MAPGSWFSPLFIAVITLGLQWPKEAA), serve as a signal peptide directing secretion. Histidine 46 provides a ligand contact to Zn(2+). A disulfide bridge connects residues cysteine 79 and cysteine 190. Glutamate 199 contacts Zn(2+). Cysteine 207 and cysteine 215 are oxidised to a cystine.

The protein belongs to the somatotropin/prolactin family.

It is found in the secreted. Growth hormone plays an important role in growth control. The chain is Somatotropin (GH) from Struthio camelus (Common ostrich).